Here is a 194-residue protein sequence, read N- to C-terminus: Peptidyl-tRNA hydrolase (194 aa).

Tyr-16 contacts tRNA. His-21 acts as the Proton acceptor in catalysis. 3 residues coordinate tRNA: Phe-67, Asn-69, and Asn-115.

The protein belongs to the PTH family. As to quaternary structure, monomer.

It localises to the cytoplasm. The catalysed reaction is an N-acyl-L-alpha-aminoacyl-tRNA + H2O = an N-acyl-L-amino acid + a tRNA + H(+). Hydrolyzes ribosome-free peptidyl-tRNAs (with 1 or more amino acids incorporated), which drop off the ribosome during protein synthesis, or as a result of ribosome stalling. Its function is as follows. Catalyzes the release of premature peptidyl moieties from peptidyl-tRNA molecules trapped in stalled 50S ribosomal subunits, and thus maintains levels of free tRNAs and 50S ribosomes. This is Peptidyl-tRNA hydrolase from Salmonella agona (strain SL483).